A 349-amino-acid chain; its full sequence is Glycerol-3-phosphate dehydrogenase [NAD(P)+] (349 aa).

4 residues coordinate NADPH: tryptophan 20, arginine 43, arginine 44, and lysine 117. Positions 117 and 147 each coordinate sn-glycerol 3-phosphate. Residue alanine 151 participates in NADPH binding. Residues lysine 202, aspartate 255, serine 265, arginine 266, and asparagine 267 each contribute to the sn-glycerol 3-phosphate site. Lysine 202 (proton acceptor) is an active-site residue. Arginine 266 serves as a coordination point for NADPH. Residues valine 297 and glutamate 299 each coordinate NADPH.

This sequence belongs to the NAD-dependent glycerol-3-phosphate dehydrogenase family.

Its subcellular location is the cytoplasm. The catalysed reaction is sn-glycerol 3-phosphate + NAD(+) = dihydroxyacetone phosphate + NADH + H(+). The enzyme catalyses sn-glycerol 3-phosphate + NADP(+) = dihydroxyacetone phosphate + NADPH + H(+). Its pathway is membrane lipid metabolism; glycerophospholipid metabolism. In terms of biological role, catalyzes the reduction of the glycolytic intermediate dihydroxyacetone phosphate (DHAP) to sn-glycerol 3-phosphate (G3P), the key precursor for phospholipid synthesis. This chain is Glycerol-3-phosphate dehydrogenase [NAD(P)+], found in Mycobacterium leprae (strain TN).